The sequence spans 1187 residues: DENN domain and WD repeat-containing protein SCD1 (1187 aa).

Residues 19–179 (TVDGDLGFHG…NVPLPTPGKD (161 aa)) form the uDENN domain. The 132-residue stretch at 199 to 330 (SLPQADISLQ…EFSTLRNDIL (132 aa)) folds into the cDENN domain. In terms of domain architecture, dDENN spans 332–437 (LLHPNVVAID…ERRLSSDEKS (106 aa)). Disordered stretches follow at residues 508–536 (SGAL…SSME) and 765–793 (SAGL…GRSW). The span at 526–536 (NTKEDNFSSME) shows a compositional bias: basic and acidic residues. Positions 779-793 (SDETQQPSEASGRSW) are enriched in polar residues. 8 WD repeats span residues 841–892 (GHGG…SELR), 897–934 (GHTG…LLEE), 937–975 (GHDS…CVAT), 978–1017 (RCSS…QMHK), 1020–1057 (GHTK…CDAV), 1060–1099 (CHAG…IKCV), 1104–1141 (LHSS…GTKV), and 1152–1187 (RTAA…TINI).

As to quaternary structure, interacts with FLS2. In terms of tissue distribution, expressed in roots, rosette and cauline leaves, buds and flowers.

It localises to the cell membrane. The protein localises to the cytoplasmic vesicle. It is found in the clathrin-coated vesicle. Functionally, involved in growth and development through its role in cytokinesis and polarized cell expansion. Required for plasma membrane internalization. May function in clathrin-mediated membrane trafficking, including plasma membrane endocytosis, essential to both cytokinesis and cell expansion. Acts as a negative regulator of basal resistance against bacteria. The sequence is that of DENN domain and WD repeat-containing protein SCD1 from Arabidopsis thaliana (Mouse-ear cress).